The following is a 96-amino-acid chain: MSEAVWHDGEDVVLRLYIQPKASRDKIVGLHGEELKIAITAPPVDGKANAHLTKFLAKQFKVAKGLVHIEKGELGRHKQIRIESPVQIPTEIKAII.

Belongs to the UPF0235 family.

The sequence is that of UPF0235 protein VIBHAR_03581 from Vibrio campbellii (strain ATCC BAA-1116).